The sequence spans 562 residues: Dihydroxy-acid dehydratase (562 aa).

[2Fe-2S] cluster is bound at residue C55. D87 is a binding site for Mg(2+). C128 provides a ligand contact to [2Fe-2S] cluster. The Mg(2+) site is built by D129 and K130. K130 carries the post-translational modification N6-carboxylysine. A [2Fe-2S] cluster-binding site is contributed by C200. E451 contributes to the Mg(2+) binding site. The active-site Proton acceptor is the S477.

Belongs to the IlvD/Edd family. As to quaternary structure, homodimer. Requires [2Fe-2S] cluster as cofactor. The cofactor is Mg(2+).

It catalyses the reaction (2R)-2,3-dihydroxy-3-methylbutanoate = 3-methyl-2-oxobutanoate + H2O. It carries out the reaction (2R,3R)-2,3-dihydroxy-3-methylpentanoate = (S)-3-methyl-2-oxopentanoate + H2O. Its pathway is amino-acid biosynthesis; L-isoleucine biosynthesis; L-isoleucine from 2-oxobutanoate: step 3/4. It participates in amino-acid biosynthesis; L-valine biosynthesis; L-valine from pyruvate: step 3/4. Its function is as follows. Functions in the biosynthesis of branched-chain amino acids. Catalyzes the dehydration of (2R,3R)-2,3-dihydroxy-3-methylpentanoate (2,3-dihydroxy-3-methylvalerate) into 2-oxo-3-methylpentanoate (2-oxo-3-methylvalerate) and of (2R)-2,3-dihydroxy-3-methylbutanoate (2,3-dihydroxyisovalerate) into 2-oxo-3-methylbutanoate (2-oxoisovalerate), the penultimate precursor to L-isoleucine and L-valine, respectively. In Cytophaga hutchinsonii (strain ATCC 33406 / DSM 1761 / CIP 103989 / NBRC 15051 / NCIMB 9469 / D465), this protein is Dihydroxy-acid dehydratase.